The primary structure comprises 282 residues: PAK4-inhibitor INKA1 (282 aa).

2 disordered regions span residues 21–50 and 92–127; these read RDTG…QFRA and GFSE…FSVS. Inka box stretches follow at residues 163–200 and 256–282; these read EAED…ELPE and PADI…VSYL.

It belongs to the INKA family. In terms of assembly, interacts with PAK4. In terms of tissue distribution, expressed in tissues of the developing head during neurulation.

Its subcellular location is the nucleus. It is found in the cytoplasm. In terms of biological role, inhibitor of the serine/threonine-protein kinase PAK4. Acts by binding PAK4 in a substrate-like manner, inhibiting the protein kinase activity. The sequence is that of PAK4-inhibitor INKA1 from Mus musculus (Mouse).